Consider the following 154-residue polypeptide: Myoglobin (154 aa).

The Globin domain maps to 2-148 (GLSDGEWQLV…FRNDIAAKYK (147 aa)). Ser-4 is modified (phosphoserine). His-65 lines the nitrite pocket. His-65 serves as a coordination point for O2. The residue at position 68 (Thr-68) is a Phosphothreonine. Residue His-94 participates in heme b binding.

The protein belongs to the globin family. Monomeric.

It is found in the cytoplasm. The protein localises to the sarcoplasm. The catalysed reaction is Fe(III)-heme b-[protein] + nitric oxide + H2O = Fe(II)-heme b-[protein] + nitrite + 2 H(+). It catalyses the reaction H2O2 + AH2 = A + 2 H2O. Monomeric heme protein which primary function is to store oxygen and facilitate its diffusion within muscle tissues. Reversibly binds oxygen through a pentacoordinated heme iron and enables its timely and efficient release as needed during periods of heightened demand. Depending on the oxidative conditions of tissues and cells, and in addition to its ability to bind oxygen, it also has a nitrite reductase activity whereby it regulates the production of bioactive nitric oxide. Under stress conditions, like hypoxia and anoxia, it also protects cells against reactive oxygen species thanks to its pseudoperoxidase activity. The chain is Myoglobin (MB) from Ctenodactylus gundi (Northern gundi).